Reading from the N-terminus, the 440-residue chain is Xylose isomerase (440 aa).

Asp307 and Asp309 together coordinate Mg(2+).

Belongs to the xylose isomerase family. As to quaternary structure, homotetramer. The cofactor is Mg(2+).

It is found in the cytoplasm. It catalyses the reaction alpha-D-xylose = alpha-D-xylulofuranose. The protein is Xylose isomerase of Pectobacterium carotovorum subsp. carotovorum (strain PC1).